The chain runs to 269 residues: Proenkephalin-A (269 aa).

An N-terminal signal peptide occupies residues 1–24 (MAQFLRLCIWLLALGSCLLATVQA). Disulfide bonds link Cys-26–Cys-48, Cys-30–Cys-52, and Cys-33–Cys-65. Residues 165–191 (DNRAKDSHQQESTNNDEDSTSKRYGGF) are disordered. 2 propeptides span residues 198–209 (SPQLEDEAKELQ) and 219–229 (VGRPEWWMDYQ). Ser-253 is subject to Phosphoserine.

This sequence belongs to the opioid neuropeptide precursor family. In terms of processing, proenkephalin-A is cleaved by CTSL to generate Met-enkephalin. Post-translationally, processed and degraded by ACE. Probably cleaved by ACE. In terms of processing, processed by ACE to generate Met-enkephalin in the nucleus accumbens of the brain. Post-translationally, the N-terminal domain contains 6 conserved cysteines thought to be involved in disulfide bonding and/or processing. Expressed in brain, heart and testis.

It is found in the secreted. Its subcellular location is the cytoplasmic vesicle. It localises to the secretory vesicle. The protein localises to the chromaffin granule lumen. Neuropeptide that competes with and mimic the effects of opiate drugs. They play a role in a number of physiologic functions, including pain perception and responses to stress. In terms of biological role, met-enkephalin-Arg-Phe neuropeptide acts as a strong ligand of Mu-type opioid receptor OPRM1. Met-enkephalin-Arg-Phe-binding to OPRM1 in the nucleus accumbens of the brain increases activation of OPRM1, leading to long-term synaptic depression of glutamate release. Functionally, increases glutamate release in the striatum and decreases GABA concentration in the striatum. Its function is as follows. Increases glutamate release in the striatum. The polypeptide is Proenkephalin-A (Penk) (Rattus norvegicus (Rat)).